The primary structure comprises 708 residues: Lactotransferrin (708 aa).

Positions 1 to 19 are cleaved as a signal peptide; it reads MKLFVPALLSLGALGLCLA. 2 Transferrin-like domains span residues 25–352 and 364–693; these read VRWC…NLRE and VVWC…NLKK. Cystine bridges form between cysteine 28/cysteine 64 and cysteine 38/cysteine 55. Aspartate 79 is a binding site for Fe cation. Residue lysine 92 is part of the active site. Tyrosine 111 serves as a coordination point for Fe cation. 5 disulfides stabilise this stretch: cysteine 134/cysteine 217, cysteine 176/cysteine 192, cysteine 179/cysteine 202, cysteine 189/cysteine 200, and cysteine 250/cysteine 264. Hydrogencarbonate-binding residues include threonine 136, arginine 140, alanine 142, and glycine 143. Residue tyrosine 211 coordinates Fe cation. N-linked (GlcNAc...) (high mannose) asparagine glycosylation occurs at asparagine 252. Position 272 (histidine 272) interacts with Fe cation. Serine 278 serves as the catalytic Nucleophile. N-linked (GlcNAc...) (hybrid) asparagine glycosylation occurs at asparagine 300. 2 disulfides stabilise this stretch: cysteine 367-cysteine 399 and cysteine 377-cysteine 390. 2 residues coordinate Fe cation: aspartate 414 and tyrosine 452. Cystine bridges form between cysteine 424/cysteine 703, cysteine 444/cysteine 666, cysteine 476/cysteine 551, cysteine 500/cysteine 694, cysteine 510/cysteine 524, cysteine 521/cysteine 534, cysteine 592/cysteine 606, and cysteine 644/cysteine 649. Hydrogencarbonate-binding residues include threonine 478, arginine 482, alanine 484, and glycine 485. Asparagine 495 carries an N-linked (GlcNAc...) (complex) asparagine; alternate glycan. The N-linked (GlcNAc...) (high mannose) asparagine; alternate glycan is linked to asparagine 495. Asparagine 495 is a glycosylation site (N-linked (GlcNAc...) (hybrid) asparagine; alternate). Tyrosine 545 contacts Fe cation. Residue asparagine 564 is glycosylated (N-linked (GlcNAc...) (high mannose) asparagine). Histidine 614 is a binding site for Fe cation.

Belongs to the transferrin family. Monomer. Found in a complex with LTF, CLU, EPPIN and SEMG1. Found in a complex with MPO and LTF; interacts directly with CP, allows Fe(3+) incorporation into LTF and activation of CP ferroxidase activity. Poly-N-acetyllactosaminic carbohydrate moiety seems to be needed for TLR4 activation.

It is found in the secreted. The protein localises to the cytoplasmic granule. Functionally, transferrins are iron binding transport proteins which can bind two Fe(3+) ions in association with the binding of an anion, usually bicarbonate. In terms of biological role, major iron-binding and multifunctional protein found in exocrine fluids such as breast milk and mucosal secretions. Has antimicrobial activity, which depends on the extracellular cation concentration. Antimicrobial properties include bacteriostasis, which is related to its ability to sequester free iron and thus inhibit microbial growth, as well as direct bactericidal properties leading to the release of lipopolysaccharides from the bacterial outer membrane. Can also prevent bacterial biofilm development in P.aeruginosa infection. Has weak antifungal activity against C.albicans. Has anabolic, differentiating and anti-apoptotic effects on osteoblasts and can also inhibit osteoclastogenesis, possibly playing a role in the regulation of bone growth. Promotes binding of species C adenoviruses to epithelial cells, promoting adenovirus infection. Can inhibit papillomavirus infections. Stimulates the TLR4 signaling pathway leading to NF-kappa-B activation and subsequent pro-inflammatory cytokine production while also interfering with the lipopolysaccharide (LPS)-stimulated TLR4 signaling. Inhibits neutrophil granulocyte migration to sites of apoptosis, when secreted by apoptotic cells. Stimulates VEGFA-mediated endothelial cell migration and proliferation. Binds heparin, chondroitin sulfate and possibly other glycosaminoglycans (GAGs). Also binds specifically to pneumococcal surface protein A (PspA), the lipid A portion of bacterial lipopolysaccharide (LPS), lysozyme and DNA. Its function is as follows. Lactoferricin binds to the bacterial surface and is crucial for the bactericidal functions. Has some antiviral activity against papillomavirus infection. N-terminal region shows strong antifungal activity against C.albicans. Contains two BBXB heparin-binding consensus sequences that appear to form the predominate functional GAG-binding site. The lactotransferrin transferrin-like domain 1 functions as a serine protease of the peptidase S60 family that cuts arginine rich regions. This function contributes to the antimicrobial activity. Shows a preferential cleavage at -Arg-Ser-Arg-Arg-|- and -Arg-Arg-Ser-Arg-|-, and of Z-Phe-Arg-|-aminomethylcoumarin sites. This Bubalus bubalis (Domestic water buffalo) protein is Lactotransferrin (LTF).